A 408-amino-acid chain; its full sequence is Imidazolonepropionase (408 aa).

Fe(3+) is bound by residues H73 and H75. Zn(2+) contacts are provided by H73 and H75. Residues R82, Y145, and H178 each contribute to the 4-imidazolone-5-propanoate site. Residue Y145 participates in N-formimidoyl-L-glutamate binding. H243 is a binding site for Fe(3+). H243 provides a ligand contact to Zn(2+). Q246 serves as a coordination point for 4-imidazolone-5-propanoate. D318 contributes to the Fe(3+) binding site. D318 provides a ligand contact to Zn(2+). Residues N320 and G322 each contribute to the N-formimidoyl-L-glutamate site. 4-imidazolone-5-propanoate is bound at residue S323.

It belongs to the metallo-dependent hydrolases superfamily. HutI family. Requires Zn(2+) as cofactor. Fe(3+) serves as cofactor.

The protein resides in the cytoplasm. The catalysed reaction is 4-imidazolone-5-propanoate + H2O = N-formimidoyl-L-glutamate. It functions in the pathway amino-acid degradation; L-histidine degradation into L-glutamate; N-formimidoyl-L-glutamate from L-histidine: step 3/3. Its function is as follows. Catalyzes the hydrolytic cleavage of the carbon-nitrogen bond in imidazolone-5-propanoate to yield N-formimidoyl-L-glutamate. It is the third step in the universal histidine degradation pathway. This is Imidazolonepropionase from Shewanella sp. (strain MR-4).